The sequence spans 377 residues: Polar flagellin F (377 aa).

2 coiled-coil regions span residues 98–131 (QSAN…ETTS) and 302–339 (DSQR…IQDT).

This sequence belongs to the bacterial flagellin family. Heteromer of multiple flagellin subunits including FlaA, FlaB/D, FlaC, FlaE and FlaF.

The protein localises to the secreted. It localises to the bacterial flagellum. In terms of biological role, flagellin is the subunit protein which polymerizes to form the filaments of bacterial flagella. The protein is Polar flagellin F (flaF) of Vibrio parahaemolyticus serotype O3:K6 (strain RIMD 2210633).